We begin with the raw amino-acid sequence, 83 residues long: RNA-binding protein Hfq (83 aa).

A Sm domain is found at 9–69 (DYFLNQLRKD…ISTFAPARNV (61 aa)).

It belongs to the Hfq family. As to quaternary structure, homohexamer.

RNA chaperone that binds small regulatory RNA (sRNAs) and mRNAs to facilitate mRNA translational regulation in response to envelope stress, environmental stress and changes in metabolite concentrations. Also binds with high specificity to tRNAs. The polypeptide is RNA-binding protein Hfq (Exiguobacterium sibiricum (strain DSM 17290 / CCUG 55495 / CIP 109462 / JCM 13490 / 255-15)).